The primary structure comprises 306 residues: Large ribosomal subunit protein mL45 (306 aa).

The tract at residues 287 to 306 is disordered; that stretch reads LKPEEEYEEAQGEAQKPQLA.

This sequence belongs to the mitochondrion-specific ribosomal protein mL45 family. As to quaternary structure, component of the mitochondrial large ribosomal subunit (mt-LSU). Mature mammalian 55S mitochondrial ribosomes consist of a small (28S) and a large (39S) subunit. The 28S small subunit contains a 12S ribosomal RNA (12S mt-rRNA) and 30 different proteins. The 39S large subunit contains a 16S rRNA (16S mt-rRNA), a copy of mitochondrial valine transfer RNA (mt-tRNA(Val)), which plays an integral structural role, and 52 different proteins.

Its subcellular location is the mitochondrion. Functionally, component of the mitochondrial large ribosomal subunit (mt-LSU). Within the mitochondrial ribosomes, required to direct the nascent polypeptide toward the tunnel exit and position the exit at a distance from the membrane surface. This is Large ribosomal subunit protein mL45 from Homo sapiens (Human).